Reading from the N-terminus, the 235-residue chain is Aspartate/glutamate leucyltransferase (235 aa).

This sequence belongs to the R-transferase family. Bpt subfamily.

The protein resides in the cytoplasm. The enzyme catalyses N-terminal L-glutamyl-[protein] + L-leucyl-tRNA(Leu) = N-terminal L-leucyl-L-glutamyl-[protein] + tRNA(Leu) + H(+). The catalysed reaction is N-terminal L-aspartyl-[protein] + L-leucyl-tRNA(Leu) = N-terminal L-leucyl-L-aspartyl-[protein] + tRNA(Leu) + H(+). In terms of biological role, functions in the N-end rule pathway of protein degradation where it conjugates Leu from its aminoacyl-tRNA to the N-termini of proteins containing an N-terminal aspartate or glutamate. The polypeptide is Aspartate/glutamate leucyltransferase (Pseudomonas savastanoi pv. phaseolicola (strain 1448A / Race 6) (Pseudomonas syringae pv. phaseolicola (strain 1448A / Race 6))).